A 314-amino-acid chain; its full sequence is Inositol oxygenase 5 (314 aa).

Residues Arg-54 and 112-114 (DES) each bind substrate. Fe cation contacts are provided by His-125, His-150, and Asp-151. Residues Lys-154 and 171 to 172 (GD) contribute to the substrate site. Residues His-223, His-249, and Asp-282 each contribute to the Fe cation site. 249 to 250 (HS) lines the substrate pocket.

This sequence belongs to the myo-inositol oxygenase family. It depends on Fe cation as a cofactor. In terms of tissue distribution, expressed in flowers and siliques.

It localises to the cytoplasm. The enzyme catalyses myo-inositol + O2 = D-glucuronate + H2O + H(+). Its pathway is polyol metabolism; myo-inositol degradation into D-glucuronate; D-glucuronate from myo-inositol: step 1/1. In terms of biological role, involved in the biosynthesis of UDP-glucuronic acid (UDP-GlcA), providing nucleotide sugars for cell-wall polymers. May be also involved in plant ascorbate biosynthesis. In Arabidopsis thaliana (Mouse-ear cress), this protein is Inositol oxygenase 5 (MIOX5).